Reading from the N-terminus, the 72-residue chain is MGVALGAGLAVSIAGIGGGIGMGIAGGKAFEAIARQPEVGGDVRTLLFITLAFIETLTIYGLLIAFMLVGKA.

2 consecutive transmembrane segments (helical) span residues 4–24 and 46–66; these read ALGA…GMGI and LLFI…LIAF.

The protein belongs to the ATPase C chain family. As to quaternary structure, F-type ATPases have 2 components, F(1) - the catalytic core - and F(0) - the membrane proton channel. F(1) has five subunits: alpha(3), beta(3), gamma(1), delta(1), epsilon(1). F(0) has three main subunits: a(1), b(2) and c(10-14). The alpha and beta chains form an alternating ring which encloses part of the gamma chain. F(1) is attached to F(0) by a central stalk formed by the gamma and epsilon chains, while a peripheral stalk is formed by the delta and b chains.

It localises to the cell membrane. Its function is as follows. F(1)F(0) ATP synthase produces ATP from ADP in the presence of a proton or sodium gradient. F-type ATPases consist of two structural domains, F(1) containing the extramembraneous catalytic core and F(0) containing the membrane proton channel, linked together by a central stalk and a peripheral stalk. During catalysis, ATP synthesis in the catalytic domain of F(1) is coupled via a rotary mechanism of the central stalk subunits to proton translocation. Functionally, key component of the F(0) channel; it plays a direct role in translocation across the membrane. A homomeric c-ring of between 10-14 subunits forms the central stalk rotor element with the F(1) delta and epsilon subunits. In Syntrophomonas wolfei subsp. wolfei (strain DSM 2245B / Goettingen), this protein is ATP synthase subunit c.